The primary structure comprises 153 residues: Large ribosomal subunit protein uL13 (153 aa).

It belongs to the universal ribosomal protein uL13 family. As to quaternary structure, part of the 50S ribosomal subunit.

Its function is as follows. This protein is one of the early assembly proteins of the 50S ribosomal subunit, although it is not seen to bind rRNA by itself. It is important during the early stages of 50S assembly. The polypeptide is Large ribosomal subunit protein uL13 (Azorhizobium caulinodans (strain ATCC 43989 / DSM 5975 / JCM 20966 / LMG 6465 / NBRC 14845 / NCIMB 13405 / ORS 571)).